We begin with the raw amino-acid sequence, 290 residues long: NAD kinase (290 aa).

Asp75 acts as the Proton acceptor in catalysis. NAD(+)-binding positions include 75-76 (DG), 148-149 (NE), Asp178, 189-194 (TAYNIS), and Gln247.

The protein belongs to the NAD kinase family. It depends on a divalent metal cation as a cofactor.

It is found in the cytoplasm. The enzyme catalyses NAD(+) + ATP = ADP + NADP(+) + H(+). Functionally, involved in the regulation of the intracellular balance of NAD and NADP, and is a key enzyme in the biosynthesis of NADP. Catalyzes specifically the phosphorylation on 2'-hydroxyl of the adenosine moiety of NAD to yield NADP. This Wolinella succinogenes (strain ATCC 29543 / DSM 1740 / CCUG 13145 / JCM 31913 / LMG 7466 / NCTC 11488 / FDC 602W) (Vibrio succinogenes) protein is NAD kinase.